The primary structure comprises 157 residues: Protein-export protein SecB (157 aa).

The protein belongs to the SecB family. Homotetramer, a dimer of dimers. One homotetramer interacts with 1 SecA dimer.

It is found in the cytoplasm. One of the proteins required for the normal export of preproteins out of the cell cytoplasm. It is a molecular chaperone that binds to a subset of precursor proteins, maintaining them in a translocation-competent state. It also specifically binds to its receptor SecA. This chain is Protein-export protein SecB, found in Proteus mirabilis (strain HI4320).